The chain runs to 75 residues: RNA-binding protein KhpA (75 aa).

A KH domain is found at 29-75 (SIIIELKVAPEDMGKVIGKQGRIAQAIRTLVKAAALKEKKRVIVEII).

Belongs to the KhpA RNA-binding protein family. In terms of assembly, forms a complex with KhpB.

It is found in the cytoplasm. In terms of biological role, a probable RNA chaperone. Forms a complex with KhpB which binds to cellular RNA and controls its expression. Plays a role in peptidoglycan (PG) homeostasis and cell length regulation. The protein is RNA-binding protein KhpA of Caldanaerobacter subterraneus subsp. tengcongensis (strain DSM 15242 / JCM 11007 / NBRC 100824 / MB4) (Thermoanaerobacter tengcongensis).